The primary structure comprises 141 residues: Large ribosomal subunit protein uL11 (141 aa).

It belongs to the universal ribosomal protein uL11 family. Part of the ribosomal stalk of the 50S ribosomal subunit. Interacts with L10 and the large rRNA to form the base of the stalk. L10 forms an elongated spine to which L12 dimers bind in a sequential fashion forming a multimeric L10(L12)X complex. One or more lysine residues are methylated.

Functionally, forms part of the ribosomal stalk which helps the ribosome interact with GTP-bound translation factors. The polypeptide is Large ribosomal subunit protein uL11 (Pseudothermotoga lettingae (strain ATCC BAA-301 / DSM 14385 / NBRC 107922 / TMO) (Thermotoga lettingae)).